The following is a 423-amino-acid chain: Adenylosuccinate synthetase (423 aa).

Residues 11–17 (GDEGKGK) and 39–41 (GHT) contribute to the GTP site. The Proton acceptor role is filled by aspartate 12. Aspartate 12 and glycine 39 together coordinate Mg(2+). IMP-binding positions include 12–15 (DEGK), 37–40 (NAGH), threonine 129, arginine 143, asparagine 219, threonine 234, and arginine 298. The active-site Proton donor is histidine 40. Substrate is bound at residue 294 to 300 (VTTGRRR). Residues arginine 300, 326-328 (KLD), and 411-413 (GTG) each bind GTP.

The protein belongs to the adenylosuccinate synthetase family. Homodimer. The cofactor is Mg(2+).

The protein localises to the cytoplasm. It carries out the reaction IMP + L-aspartate + GTP = N(6)-(1,2-dicarboxyethyl)-AMP + GDP + phosphate + 2 H(+). It participates in purine metabolism; AMP biosynthesis via de novo pathway; AMP from IMP: step 1/2. Its function is as follows. Plays an important role in the de novo pathway and in the salvage pathway of purine nucleotide biosynthesis. Catalyzes the first committed step in the biosynthesis of AMP from IMP. The chain is Adenylosuccinate synthetase from Penicillium rubens (strain ATCC 28089 / DSM 1075 / NRRL 1951 / Wisconsin 54-1255) (Penicillium chrysogenum).